The primary structure comprises 391 residues: Multidrug resistance protein MdtL (391 aa).

A run of 12 helical transmembrane segments spans residues phenylalanine 4–valine 24, isoleucine 42–alanine 62, proline 69–glutamate 89, leucine 93–phenylalanine 113, leucine 131–methionine 151, serine 158–leucine 178, phenylalanine 203–valine 222, alanine 245–phenylalanine 265, threonine 269–proline 289, valine 293–methionine 313, leucine 331–isoleucine 351, and methionine 356–alanine 376.

It belongs to the major facilitator superfamily. DHA1 family. MdtL (TC 2.A.1.2.22) subfamily.

It localises to the cell inner membrane. In terms of biological role, confers resistance to chloramphenicol. The sequence is that of Multidrug resistance protein MdtL from Escherichia coli O17:K52:H18 (strain UMN026 / ExPEC).